The sequence spans 581 residues: Oligo-1,6-glucosidase IMA5 (581 aa).

D210 functions as the Nucleophile in the catalytic mechanism. E272 functions as the Proton donor in the catalytic mechanism.

The protein belongs to the glycosyl hydrolase 13 family.

The catalysed reaction is Hydrolysis of (1-&gt;6)-alpha-D-glucosidic linkages in some oligosaccharides produced from starch and glycogen by alpha-amylase, and in isomaltose.. Functionally, alpha-glucosidase with specificity for isomaltose, maltose, and palatinose. In Saccharomyces cerevisiae (strain ATCC 204508 / S288c) (Baker's yeast), this protein is Oligo-1,6-glucosidase IMA5 (IMA5).